A 319-amino-acid chain; its full sequence is GTP 3',8-cyclase (319 aa).

The Radical SAM core domain maps to 4–227 (KHGRKINYLR…VETEKSSTAL (224 aa)). Residue Arg13 coordinates GTP. The [4Fe-4S] cluster site is built by Cys20 and Cys24. Residue Tyr26 participates in S-adenosyl-L-methionine binding. Cys27 contributes to the [4Fe-4S] cluster binding site. Arg63 lines the GTP pocket. Gly67 provides a ligand contact to S-adenosyl-L-methionine. Thr94 is a binding site for GTP. Ser118 is a binding site for S-adenosyl-L-methionine. GTP is bound at residue Lys155. An S-adenosyl-L-methionine-binding site is contributed by Met189. [4Fe-4S] cluster is bound by residues Cys249 and Cys252. Residue 254 to 256 (RVR) participates in GTP binding. Cys266 is a [4Fe-4S] cluster binding site.

This sequence belongs to the radical SAM superfamily. MoaA family. As to quaternary structure, monomer and homodimer. The cofactor is [4Fe-4S] cluster.

The catalysed reaction is GTP + AH2 + S-adenosyl-L-methionine = (8S)-3',8-cyclo-7,8-dihydroguanosine 5'-triphosphate + 5'-deoxyadenosine + L-methionine + A + H(+). It participates in cofactor biosynthesis; molybdopterin biosynthesis. In terms of biological role, catalyzes the cyclization of GTP to (8S)-3',8-cyclo-7,8-dihydroguanosine 5'-triphosphate. The chain is GTP 3',8-cyclase from Clostridium botulinum (strain ATCC 19397 / Type A).